Reading from the N-terminus, the 418-residue chain is E3 ubiquitin-protein ligase makorin-2 (418 aa).

C3H1-type zinc fingers lie at residues 2 to 29 (NTKHVTCRYFLHGVCREGGRCLFSHDLA) and 31 to 58 (SKPSTVCRFYQRGQCAYGARCRYDHVKP). The segment at 76–100 (ESTPPLLPTQEAAAPVTKSAPQRRE) is disordered. The segment at 164-191 (DAPQQLCPFAQAGGCHYGESCPYIHGNV) adopts a C3H1-type 3 zinc-finger fold. The interval 192–221 (CEICGLQVLHPYDQEQRGHHEKLCMANFER) is makorin-type Cys-His. The RING-type zinc finger occupies 237-291 (CSICMERVYDKQSPSERRFGILSNCHHTYCLACIRQWRCARQFENPVIKSCPECR). The C3H1-type 4 zinc-finger motif lies at 320-349 (GMGKKACKYFDQGRGTCPFGGKCLYLHAYP).

Its subcellular location is the cytoplasm. It is found in the nucleus. It carries out the reaction S-ubiquitinyl-[E2 ubiquitin-conjugating enzyme]-L-cysteine + [acceptor protein]-L-lysine = [E2 ubiquitin-conjugating enzyme]-L-cysteine + N(6)-ubiquitinyl-[acceptor protein]-L-lysine.. It participates in protein modification; protein ubiquitination. Functionally, E3 ubiquitin ligase catalyzing the covalent attachment of ubiquitin moieties onto substrate proteins. Inhibits neurogenesis and axis formation during embryonic development by modulating the phosphatidylinositol 3-kinase (PI3K) pathway. Acts downstream of PI3K and akt1 to up-regulate gsk3b mRNA expression. The protein is E3 ubiquitin-protein ligase makorin-2 (mkrn2) of Xenopus tropicalis (Western clawed frog).